Here is a 436-residue protein sequence, read N- to C-terminus: MVLPTVAIVGRPNVGKSTLFNRIAGERISIVEDVEGVTRDRIYTTGEWLNRKFSLIDTGGIDDVDAPFMEQIKHQADIAMTEADVIVFVVSGKEGVTDADEYVSRILYKTNKPVILAVNKVDNPEMRNDIYDFYSLGLGDPYPLSSVHGIGTGDILDAIVENLPVEEENENPDIIRFSLIGRPNVGKSSLINAILGEDRVIASPVAGTTRDAIDTNFVDSQGQEYTMIDTAGMRKSGKVYENTEKYSVMRSMRAIDRSDVVLMVINAEEGIREYDKRIAGFAHETGKGIIIVVNKWDTIEKDNHTVSQWEADIRDNFQFLSYAPIIFVSAETKQRLHKLPDMIKRISESQNKRIPSAVLNDVIMDAIAINPTPTDKGKRLKIFYATQVAVKPPTFVVFVNEEELMHFSYLRFLENQIREAFVFEGTPINLIARKRK.

EngA-type G domains follow at residues 4 to 167 (PTVA…PVEE) and 175 to 351 (IRFS…ESQN). GTP is bound by residues 10–17 (GRPNVGKS), 57–61 (DTGGI), 119–122 (NKVD), 181–188 (GRPNVGKS), 229–233 (DTAGM), and 294–297 (NKWD). The KH-like domain occupies 352–436 (KRIPSAVLND…PINLIARKRK (85 aa)).

Belongs to the TRAFAC class TrmE-Era-EngA-EngB-Septin-like GTPase superfamily. EngA (Der) GTPase family. As to quaternary structure, associates with the 50S ribosomal subunit.

Functionally, GTPase that plays an essential role in the late steps of ribosome biogenesis. In Streptococcus agalactiae serotype Ia (strain ATCC 27591 / A909 / CDC SS700), this protein is GTPase Der.